The primary structure comprises 205 residues: Dephospho-CoA kinase (205 aa).

The DPCK domain occupies 7–205 (IIGVTGRIAS…QGIINYERFE (199 aa)). Residue 15–20 (ASGKDT) participates in ATP binding.

This sequence belongs to the CoaE family.

The protein localises to the cytoplasm. The catalysed reaction is 3'-dephospho-CoA + ATP = ADP + CoA + H(+). It participates in cofactor biosynthesis; coenzyme A biosynthesis; CoA from (R)-pantothenate: step 5/5. Its function is as follows. Catalyzes the phosphorylation of the 3'-hydroxyl group of dephosphocoenzyme A to form coenzyme A. The polypeptide is Dephospho-CoA kinase (Borreliella burgdorferi (strain ATCC 35210 / DSM 4680 / CIP 102532 / B31) (Borrelia burgdorferi)).